The following is a 356-amino-acid chain: Viral cathepsin (356 aa).

An N-terminal signal peptide occupies residues 1 to 40 (MYANALVCLNPSFIKLQFHIVCTMNIIGIVTLALCSAASA). A propeptide spans 41 to 144 (ADEGAAYNLQ…IILNQPPDKG (104 aa)) (activation peptide). 3 cysteine pairs are disulfide-bonded: Cys-165–Cys-206, Cys-199–Cys-239, and Cys-295–Cys-343. Residue Cys-168 is part of the active site. Catalysis depends on residues His-302 and Asn-322.

This sequence belongs to the peptidase C1 family. Synthesized as an inactive proenzyme and activated by proteolytic removal of the inhibitory propeptide.

It catalyses the reaction Endopeptidase of broad specificity, hydrolyzing substrates of both cathepsin L and cathepsin B.. Its function is as follows. Cysteine protease that plays an essential role in host liquefaction to facilitate horizontal transmission of the virus. May participate in the degradation of foreign protein expressed by the baculovirus system. The protein is Viral cathepsin (VCATH) of Lepidoptera (butterflies and moths).